A 116-amino-acid chain; its full sequence is Putative anti-sigma factor antagonist BtrV (116 aa).

The STAS domain occupies 1 to 110 (MKLTMDKIDG…NSREAAAAAF (110 aa)). Serine 55 carries the post-translational modification Phosphoserine; by BtrW.

It belongs to the anti-sigma-factor antagonist family. Interacts with BtrW. Phosphorylated by BtrW. Dephosphorylated by BtrU.

Functionally, possible positive regulator of sigma-B activity. Non-phosphorylated BtrV binds to BtrW, preventing its association with an unknown partner(s) that might be sigma-B. When phosphorylated, releases BtrW, which is then free to complex with and inactivate its partner. Involved in type III secretion system (T3SS). The sequence is that of Putative anti-sigma factor antagonist BtrV (btrV) from Bordetella bronchiseptica (strain ATCC BAA-588 / NCTC 13252 / RB50) (Alcaligenes bronchisepticus).